The primary structure comprises 469 residues: Ribulose bisphosphate carboxylase large chain (469 aa).

K7 bears the N6,N6,N6-trimethyllysine mark. N116 and T166 together coordinate substrate. K168 serves as the catalytic Proton acceptor. Position 170 (K170) interacts with substrate. Mg(2+) contacts are provided by K194, D196, and E197. K194 bears the N6-carboxylysine mark. The active-site Proton acceptor is the H287. R288, H320, and S372 together coordinate substrate.

The protein belongs to the RuBisCO large chain family. Type I subfamily. Heterohexadecamer of 8 large chains and 8 small chains; disulfide-linked. The disulfide link is formed within the large subunit homodimers. It depends on Mg(2+) as a cofactor. Post-translationally, the disulfide bond which can form in the large chain dimeric partners within the hexadecamer appears to be associated with oxidative stress and protein turnover.

Its subcellular location is the plastid. The protein resides in the chloroplast. It carries out the reaction 2 (2R)-3-phosphoglycerate + 2 H(+) = D-ribulose 1,5-bisphosphate + CO2 + H2O. The catalysed reaction is D-ribulose 1,5-bisphosphate + O2 = 2-phosphoglycolate + (2R)-3-phosphoglycerate + 2 H(+). Functionally, ruBisCO catalyzes two reactions: the carboxylation of D-ribulose 1,5-bisphosphate, the primary event in carbon dioxide fixation, as well as the oxidative fragmentation of the pentose substrate in the photorespiration process. Both reactions occur simultaneously and in competition at the same active site. The sequence is that of Ribulose bisphosphate carboxylase large chain from Pachira aquatica (Guiana chestnut).